Consider the following 206-residue polypeptide: 2,3-bisphosphoglycerate-dependent phosphoglycerate mutase (206 aa).

Substrate-binding positions include 9–16, 22–23, Arg61, 88–91, Lys99, 115–116, and 159–160; these read RHGQSEWN, TG, ERNY, RR, and GN. Catalysis depends on His10, which acts as the Tele-phosphohistidine intermediate. Glu88 acts as the Proton donor/acceptor in catalysis.

This sequence belongs to the phosphoglycerate mutase family. BPG-dependent PGAM subfamily. As to quaternary structure, homodimer.

It catalyses the reaction (2R)-2-phosphoglycerate = (2R)-3-phosphoglycerate. Its pathway is carbohydrate degradation; glycolysis; pyruvate from D-glyceraldehyde 3-phosphate: step 3/5. Catalyzes the interconversion of 2-phosphoglycerate and 3-phosphoglycerate. The polypeptide is 2,3-bisphosphoglycerate-dependent phosphoglycerate mutase (Bartonella tribocorum (strain CIP 105476 / IBS 506)).